Here is a 452-residue protein sequence, read N- to C-terminus: MFRRNTLTPGKGRNSLDMFSVNDFMTWIDGMKKTSDENGCSPFTLKPIKSTSDRKRRRHSRMSIVNVWNQSPTSYRDQLLHFNHESDVSIDDTSEVAGEETFGQIERFEYLLSSDGDGDGDVEIENPEVDDYQVSEHDFGLEDDFNGDGCQQMIEIESDEAISEEEEDLSNENKSESQLGESFSFNQDNTFVNYASPASITEEFVEPKDSQFNHDVNLMQGSAPGYSTVEPEDNFASEIQTNAPEVHLNYENSDYTEDHIDLLDHHFCDLSEISKFNHQHSGKPDHPSLVSNASLAPFIVEGNGIKNGLLHYNMETAETDESYTDLDDTFARLKNLSQRHTNHSTDHHDDTVDSHLLHSFVSAENANEPTNDVDDNSLQEQVADASQFVSFLETTKTVATSNLRSTKRKLSEILENGQSGDCSLTDTNVDFDISEKQASGNSRSMIPLRKKR.

It localises to the cytoplasm. It is found in the nucleus. This is an uncharacterized protein from Schizosaccharomyces pombe (strain 972 / ATCC 24843) (Fission yeast).